We begin with the raw amino-acid sequence, 91 residues long: Metalloproteinase inhibitor 2 (91 aa).

The NTR domain occupies 1-91 (KAVSEKEVDS…FIVPWDTLST (91 aa)).

Belongs to the protease inhibitor I35 (TIMP) family. In terms of processing, the activity of TIMP2 is dependent on the presence of disulfide bonds.

Its subcellular location is the secreted. In terms of biological role, complexes with metalloproteinases (such as collagenases) and irreversibly inactivates them. In Equus caballus (Horse), this protein is Metalloproteinase inhibitor 2 (TIMP2).